We begin with the raw amino-acid sequence, 452 residues long: AP-4 complex subunit mu-1 (452 aa).

In terms of domain architecture, MHD spans 184-451 (KNEVFLDVVE…LSHSDAYVIR (268 aa)).

Belongs to the adaptor complexes medium subunit family. Adaptor protein complex 4 (AP-4) is a heterotetramer composed of two large adaptins (epsilon-type subunit AP4E1 and beta-type subunit AP4B1), a medium adaptin (mu-type subunit AP4M1) and a small adaptin (sigma-type AP4S1). Interacts with tyrosine-based sorting signals on the cytoplasmic tail of cargo proteins such as APP, ATG9A, LAMP2 and NAGPA. Interacts with the C-terminal domain of GRID2. Interacts with GRIA1 and GRIA2; the interaction is indirect via CACNG3. Interacts with CACNG3; CACNG3 associates GRIA1 and GRIA2 with the adaptor protein complex 4 (AP-4) to target them to the somatodendritic compartment of neurons. Interacts with HOOK1 and HOOK2; the interactions are direct, mediate the interaction between FTS-Hook-FHIP (FHF) complex and AP-4 and the perinuclear distribution of AP-4.

The protein localises to the golgi apparatus. It localises to the trans-Golgi network membrane. Its subcellular location is the early endosome. Functionally, component of the adaptor protein complex 4 (AP-4). Adaptor protein complexes are vesicle coat components involved both in vesicle formation and cargo selection. They control the vesicular transport of proteins in different trafficking pathways. AP-4 forms a non clathrin-associated coat on vesicles departing the trans-Golgi network (TGN) and may be involved in the targeting of proteins from the trans-Golgi network (TGN) to the endosomal-lysosomal system. It is also involved in protein sorting to the basolateral membrane in epithelial cells and the proper asymmetric localization of somatodendritic proteins in neurons. Within AP-4, the mu-type subunit AP4M1 is directly involved in the recognition and binding of tyrosine-based sorting signals found in the cytoplasmic part of cargos. The adaptor protein complex 4 (AP-4) may also recognize other types of sorting signal. The chain is AP-4 complex subunit mu-1 from Bos taurus (Bovine).